The primary structure comprises 55 residues: UPF0391 membrane protein NE1120 (55 aa).

A run of 2 helical transmembrane segments spans residues Met4 to Ala24 and Leu27 to Leu47.

The protein belongs to the UPF0391 family.

Its subcellular location is the cell membrane. The chain is UPF0391 membrane protein NE1120 from Nitrosomonas europaea (strain ATCC 19718 / CIP 103999 / KCTC 2705 / NBRC 14298).